The primary structure comprises 556 residues: Dihydroxy-acid dehydratase (556 aa).

Position 47 (cysteine 47) interacts with [2Fe-2S] cluster. Aspartate 79 provides a ligand contact to Mg(2+). Cysteine 120 is a binding site for [2Fe-2S] cluster. 2 residues coordinate Mg(2+): aspartate 121 and lysine 122. Lysine 122 is subject to N6-carboxylysine. Position 192 (cysteine 192) interacts with [2Fe-2S] cluster. Position 444 (glutamate 444) interacts with Mg(2+). Serine 470 functions as the Proton acceptor in the catalytic mechanism.

This sequence belongs to the IlvD/Edd family. As to quaternary structure, homodimer. [2Fe-2S] cluster is required as a cofactor. The cofactor is Mg(2+).

The enzyme catalyses (2R)-2,3-dihydroxy-3-methylbutanoate = 3-methyl-2-oxobutanoate + H2O. The catalysed reaction is (2R,3R)-2,3-dihydroxy-3-methylpentanoate = (S)-3-methyl-2-oxopentanoate + H2O. The protein operates within amino-acid biosynthesis; L-isoleucine biosynthesis; L-isoleucine from 2-oxobutanoate: step 3/4. It participates in amino-acid biosynthesis; L-valine biosynthesis; L-valine from pyruvate: step 3/4. Functionally, functions in the biosynthesis of branched-chain amino acids. Catalyzes the dehydration of (2R,3R)-2,3-dihydroxy-3-methylpentanoate (2,3-dihydroxy-3-methylvalerate) into 2-oxo-3-methylpentanoate (2-oxo-3-methylvalerate) and of (2R)-2,3-dihydroxy-3-methylbutanoate (2,3-dihydroxyisovalerate) into 2-oxo-3-methylbutanoate (2-oxoisovalerate), the penultimate precursor to L-isoleucine and L-valine, respectively. This is Dihydroxy-acid dehydratase from Prochlorococcus marinus (strain MIT 9211).